Reading from the N-terminus, the 74-residue chain is Omega-conotoxin-like protein 1 (74 aa).

Residues 1–20 (MSKFILLVCILLLTTNIVSA) form the signal peptide. 3 disulfide bridges follow: C24–C38, C31–C43, and C37–C50.

As to expression, highly expressed in brain. Is also found in hemolymph.

In terms of biological role, the impact of this protein on the neuronal activity of the honeybee brain is not known. It does not affect apparent movement or hatching of blowfly larvae. However, when injected into fish, it induces a strong reversible paralytic effect. In addition, the presence of this small peptide in the hemolymph of adult drones together with its induction after bacterial infection suggests that this peptide exhibits antibacterial activity. This peptide may act by inhibiting ion channels. This Apis mellifera (Honeybee) protein is Omega-conotoxin-like protein 1.